A 160-amino-acid chain; its full sequence is Putative 4-hydroxy-4-methyl-2-oxoglutarate aldolase (160 aa).

Substrate contacts are provided by residues 76-79 (GDMI) and R98. D99 provides a ligand contact to a divalent metal cation.

The protein belongs to the class II aldolase/RraA-like family. Homotrimer. It depends on a divalent metal cation as a cofactor.

The catalysed reaction is 4-hydroxy-4-methyl-2-oxoglutarate = 2 pyruvate. It carries out the reaction oxaloacetate + H(+) = pyruvate + CO2. Functionally, catalyzes the aldol cleavage of 4-hydroxy-4-methyl-2-oxoglutarate (HMG) into 2 molecules of pyruvate. Also contains a secondary oxaloacetate (OAA) decarboxylase activity due to the common pyruvate enolate transition state formed following C-C bond cleavage in the retro-aldol and decarboxylation reactions. This chain is Putative 4-hydroxy-4-methyl-2-oxoglutarate aldolase, found in Alcanivorax borkumensis (strain ATCC 700651 / DSM 11573 / NCIMB 13689 / SK2).